Reading from the N-terminus, the 171-residue chain is 3-hydroxydecanoyl-[acyl-carrier-protein] dehydratase (171 aa).

Histidine 71 is a catalytic residue.

This sequence belongs to the thioester dehydratase family. FabA subfamily. In terms of assembly, homodimer.

It localises to the cytoplasm. It carries out the reaction a (3R)-hydroxyacyl-[ACP] = a (2E)-enoyl-[ACP] + H2O. The catalysed reaction is (3R)-hydroxydecanoyl-[ACP] = (2E)-decenoyl-[ACP] + H2O. It catalyses the reaction (2E)-decenoyl-[ACP] = (3Z)-decenoyl-[ACP]. It functions in the pathway lipid metabolism; fatty acid biosynthesis. Its function is as follows. Necessary for the introduction of cis unsaturation into fatty acids. Catalyzes the dehydration of (3R)-3-hydroxydecanoyl-ACP to E-(2)-decenoyl-ACP and then its isomerization to Z-(3)-decenoyl-ACP. Can catalyze the dehydratase reaction for beta-hydroxyacyl-ACPs with saturated chain lengths up to 16:0, being most active on intermediate chain length. This is 3-hydroxydecanoyl-[acyl-carrier-protein] dehydratase from Sinorhizobium medicae (strain WSM419) (Ensifer medicae).